We begin with the raw amino-acid sequence, 493 residues long: Acetylcholine receptor subunit beta-type unc-29 (493 aa).

Positions 1-26 are cleaved as a signal peptide; sequence MRTNRLSWILVLSVVIFLVIINTINA. N-linked (GlcNAc...) asparagine glycans are attached at residues Asn25 and Asn50. The Extracellular portion of the chain corresponds to 27–232; sequence SDDEERLMVD…QVRIRRKTLF (206 aa). A disulfide bridge connects residues Cys155 and Cys169. The next 3 membrane-spanning stretches (helical) occupy residues 233–254, 262–280, and 296–317; these read YTVV…VFFL, ITLT…LLVS, and YLLL…IINV. The Cytoplasmic portion of the chain corresponds to 318–445; it reads YFRGPRTHRM…WKYVAMIIDR (128 aa). The helical transmembrane segment at 446–466 threads the bilayer; that stretch reads LLLYVFFGITVGGTCGILFSA.

The protein belongs to the ligand-gated ion channel (TC 1.A.9) family. Acetylcholine receptor (TC 1.A.9.1) subfamily. In terms of assembly, interacts with lev-1. Component of nicotinic acetylcholine receptor composed of 2 non-alpha subunits lev-1 and unc-29, and 3 alpha subunits unc-38, unc-63 and lev-8. Interacts with oig-4. Interacts with crld-1.

Its subcellular location is the postsynaptic cell membrane. It is found in the cell membrane. Functionally, non-alpha subunit of nicotinic acetylcholine receptor (nAChR). Involved in nAChR sensitivity to nicotine and levasimole. The chain is Acetylcholine receptor subunit beta-type unc-29 from Caenorhabditis elegans.